We begin with the raw amino-acid sequence, 249 residues long: 5'-nucleotidase SurE (249 aa).

The a divalent metal cation site is built by Asp8, Asp9, Ser39, and Asn91.

It belongs to the SurE nucleotidase family. The cofactor is a divalent metal cation.

It is found in the cytoplasm. It carries out the reaction a ribonucleoside 5'-phosphate + H2O = a ribonucleoside + phosphate. Functionally, nucleotidase that shows phosphatase activity on nucleoside 5'-monophosphates. This Pseudomonas savastanoi pv. phaseolicola (strain 1448A / Race 6) (Pseudomonas syringae pv. phaseolicola (strain 1448A / Race 6)) protein is 5'-nucleotidase SurE.